We begin with the raw amino-acid sequence, 652 residues long: Probable potassium transport system protein Kup (652 aa).

The segment covering 1–20 (MSNDTSPGTSSVDSKSSDPS) has biased composition (low complexity). The disordered stretch occupies residues 1–26 (MSNDTSPGTSSVDSKSSDPSYGVPGH). Transmembrane regions (helical) follow at residues 36–56 (LSLG…LYAL), 76–96 (LVSL…VMFI), 125–145 (WLIV…MITP), 161–181 (PSFD…LFCI), 193–213 (FGPI…FNII), 228–248 (AIHF…SVVL), 270–290 (LGWY…QCAL), 314–334 (LIIL…TGAF), 362–382 (IYIP…IAMF), 391–411 (AYGI…GVLV), 419–439 (AWQS…FFLS), and 444–464 (IPEG…MLMT).

The protein belongs to the HAK/KUP transporter (TC 2.A.72) family.

It is found in the cell inner membrane. It carries out the reaction K(+)(in) + H(+)(in) = K(+)(out) + H(+)(out). Its function is as follows. Transport of potassium into the cell. Likely operates as a K(+):H(+) symporter. This is Probable potassium transport system protein Kup from Zymomonas mobilis subsp. mobilis (strain ATCC 31821 / ZM4 / CP4).